A 496-amino-acid chain; its full sequence is Glutamyl-tRNA(Gln) amidotransferase subunit A (496 aa).

Active-site charge relay system residues include K75 and S150. The active-site Acyl-ester intermediate is S174.

This sequence belongs to the amidase family. GatA subfamily. In terms of assembly, heterotrimer of A, B and C subunits.

It catalyses the reaction L-glutamyl-tRNA(Gln) + L-glutamine + ATP + H2O = L-glutaminyl-tRNA(Gln) + L-glutamate + ADP + phosphate + H(+). Allows the formation of correctly charged Gln-tRNA(Gln) through the transamidation of misacylated Glu-tRNA(Gln) in organisms which lack glutaminyl-tRNA synthetase. The reaction takes place in the presence of glutamine and ATP through an activated gamma-phospho-Glu-tRNA(Gln). The protein is Glutamyl-tRNA(Gln) amidotransferase subunit A of Burkholderia lata (strain ATCC 17760 / DSM 23089 / LMG 22485 / NCIMB 9086 / R18194 / 383).